The sequence spans 264 residues: Thiazole synthase (264 aa).

The Schiff-base intermediate with DXP role is filled by K106. 1-deoxy-D-xylulose 5-phosphate contacts are provided by residues G167, A193–G194, and N215–T216.

It belongs to the ThiG family. In terms of assembly, homotetramer. Forms heterodimers with either ThiH or ThiS.

Its subcellular location is the cytoplasm. The catalysed reaction is [ThiS sulfur-carrier protein]-C-terminal-Gly-aminoethanethioate + 2-iminoacetate + 1-deoxy-D-xylulose 5-phosphate = [ThiS sulfur-carrier protein]-C-terminal Gly-Gly + 2-[(2R,5Z)-2-carboxy-4-methylthiazol-5(2H)-ylidene]ethyl phosphate + 2 H2O + H(+). It participates in cofactor biosynthesis; thiamine diphosphate biosynthesis. Catalyzes the rearrangement of 1-deoxy-D-xylulose 5-phosphate (DXP) to produce the thiazole phosphate moiety of thiamine. Sulfur is provided by the thiocarboxylate moiety of the carrier protein ThiS. In vitro, sulfur can be provided by H(2)S. The sequence is that of Thiazole synthase from Stenotrophomonas maltophilia (strain K279a).